We begin with the raw amino-acid sequence, 105 residues long: MEVSQFDNVSVVKKANLYFDGKCVSHTVLFSDGTRKTLGVIFPATLTFNTGAPEIMEINAGVCRVRLAGSEAWQTYGAGQQFDVPGNSSFDIEVQETLDYVCHFG.

This sequence belongs to the nucleoside phosphorylase PpnP family.

The enzyme catalyses a purine D-ribonucleoside + phosphate = a purine nucleobase + alpha-D-ribose 1-phosphate. It carries out the reaction adenosine + phosphate = alpha-D-ribose 1-phosphate + adenine. It catalyses the reaction cytidine + phosphate = cytosine + alpha-D-ribose 1-phosphate. The catalysed reaction is guanosine + phosphate = alpha-D-ribose 1-phosphate + guanine. The enzyme catalyses inosine + phosphate = alpha-D-ribose 1-phosphate + hypoxanthine. It carries out the reaction thymidine + phosphate = 2-deoxy-alpha-D-ribose 1-phosphate + thymine. It catalyses the reaction uridine + phosphate = alpha-D-ribose 1-phosphate + uracil. The catalysed reaction is xanthosine + phosphate = alpha-D-ribose 1-phosphate + xanthine. In terms of biological role, catalyzes the phosphorolysis of diverse nucleosides, yielding D-ribose 1-phosphate and the respective free bases. Can use uridine, adenosine, guanosine, cytidine, thymidine, inosine and xanthosine as substrates. Also catalyzes the reverse reactions. The protein is Pyrimidine/purine nucleoside phosphorylase of Cupriavidus pinatubonensis (strain JMP 134 / LMG 1197) (Cupriavidus necator (strain JMP 134)).